A 429-amino-acid polypeptide reads, in one-letter code: Malate dehydrogenase [NADP] 1, chloroplastic (429 aa).

A chloroplast-targeting transit peptide spans 1 to 40 (MGLSTAYSPVGSHLAPAPLGHRRSAQLHRPRRALLATVRC). Cys-64 and Cys-69 are oxidised to a cystine. NADP(+) is bound at residue 93-99 (GAAGMIS). Arg-174 and Arg-180 together coordinate substrate. NADP(+)-binding positions include Asn-187, Gln-194, and 211 to 213 (VGN). Substrate is bound by residues Asn-213 and Arg-244. His-269 serves as the catalytic Proton acceptor. Residues Cys-405 and Cys-417 are joined by a disulfide bond.

Belongs to the LDH/MDH superfamily. MDH type 2 family. In terms of assembly, homodimer.

The protein resides in the plastid. It localises to the chloroplast. The catalysed reaction is (S)-malate + NADP(+) = oxaloacetate + NADPH + H(+). Chloroplast NADP-MDH is activated upon illumination. In order to be enzymatically active, disulfide bridges on the protein must be reduced by thioredoxin which receives electrons from ferredoxin and the electron transport system of photosynthesis. The chloroplastic, NADP-dependent form is essential for the photosynthesis C4 cycle, which allows plants to circumvent the problem of photorespiration. In C4 plants, NADP-MDH activity acts to convert oxaloacetate to malate in chloroplasts of mesophyll cells for transport to the bundle sheath cells. The chain is Malate dehydrogenase [NADP] 1, chloroplastic from Sorghum bicolor (Sorghum).